Here is a 451-residue protein sequence, read N- to C-terminus: MSTPYEPEFQQAYKEIVGSIESSKLFEVHPELKRVLPIISIPERVLEFRVTWEDDKGNCRVNTGYRVQFNSALGPYKGGLRFHPSVNLSILKFLGFEQIFKNALTGLPMGGGKGGSDFDPKGKSDNEIRRFSQAFMRQLFRYIGPQTDVPAGDIGVTGFVVMHMFGEYKRLRNEYSGVVTGKHMLTGGSNIRPEATGYGVVYYVKHMIEHRTKGAETLKGKRVAISGSGNVAQYAALKCIQEGAIVKSISDSKGVLIAKTAEGLVPEEIHEIMALKEKRASIADSASLCKKHHYIAGARPWTNVGEIDIALPCATQNEVSGEEAAALIKQGCRYVAEGSNMGSSAEAVEVFEKSRASGEGCWLAPGKAANAGGVAVSGLEMAQNAQFSTWTHAEVDAKLAGIMQNIFEQSTDVASKYCDSGSNNIPSLVDGANIAGFLKVATAMQAVGDWW.

K113 is a catalytic residue. Phosphoserine is present on S252.

Belongs to the Glu/Leu/Phe/Val dehydrogenases family. In terms of assembly, homohexamer.

It catalyses the reaction L-glutamate + NADP(+) + H2O = 2-oxoglutarate + NH4(+) + NADPH + H(+). The chain is NADP-specific glutamate dehydrogenase (gdh1) from Schizosaccharomyces pombe (strain 972 / ATCC 24843) (Fission yeast).